Reading from the N-terminus, the 271-residue chain is MTGWIVLPISLTAFSIPGIWIVYAMAVMNHHVCPVENWTYNLTCTDDNTKAGTPKSCCTLEDVPLISKCGTYPPESCLFSLIGNVGAFMVVIICLLRYSQVIEISQRSWLNTTALIAGCTNAAGLVMVGNFQVDYAKSLHYIGAGVAFPAGLLFVCLSSILSYQLAASALDYWLGHLRVSLTIVALISLVLTGVFFIQESFLMQHLVAICEWIFVLDILVFYGTFAYEFGSVSTDTMMAALQSSAARSCKSPGSSSTSTQLHCNAERIAMI.

Topologically, residues 1 to 3 (MTG) are cytoplasmic. A helical transmembrane segment spans residues 4–24 (WIVLPISLTAFSIPGIWIVYA). Topologically, residues 25–75 (MAVMNHHVCPVENWTYNLTCTDDNTKAGTPKSCCTLEDVPLISKCGTYPPE) are extracellular. N-linked (GlcNAc...) asparagine glycans are attached at residues N37 and N41. Residues 76–96 (SCLFSLIGNVGAFMVVIICLL) traverse the membrane as a helical segment. The Cytoplasmic portion of the chain corresponds to 97–108 (RYSQVIEISQRS). The helical transmembrane segment at 109 to 129 (WLNTTALIAGCTNAAGLVMVG) threads the bilayer. Residues 130–140 (NFQVDYAKSLH) lie on the Extracellular side of the membrane. A helical transmembrane segment spans residues 141–161 (YIGAGVAFPAGLLFVCLSSIL). Over 162-182 (SYQLAASALDYWLGHLRVSLT) the chain is Cytoplasmic. A helical transmembrane segment spans residues 183–203 (IVALISLVLTGVFFIQESFLM). The Extracellular segment spans residues 204-205 (QH). A helical transmembrane segment spans residues 206–226 (LVAICEWIFVLDILVFYGTFA). Residues 227–271 (YEFGSVSTDTMMAALQSSAARSCKSPGSSSTSTQLHCNAERIAMI) are Cytoplasmic-facing.

Belongs to the DRAM/TMEM150 family.

The protein localises to the cell membrane. Functionally, regulates localization of phosphatidylinositol 4-kinase (PI4K) to the plasma membrane. The sequence is that of Transmembrane protein 150A (tmem150a) from Xenopus laevis (African clawed frog).